The following is a 475-amino-acid chain: F-box/kelch-repeat protein At1g22040 (475 aa).

Residues 1–28 (MGSVMSLSCSKRKATSQDVECSSESRKR) form a disordered region. The F-box domain maps to 41–87 (CRLIPSLPDELSIQILARLPRICYSSVRLVSRRWRSAVSTSEVYSLR). Kelch repeat units follow at residues 94-140 (EEWL…KSLS), 182-228 (GLYV…VLNK), 229-279 (KLYV…AFLA), 306-350 (PFFV…VDGE), and 352-401 (YAFD…GFHG).

The polypeptide is F-box/kelch-repeat protein At1g22040 (Arabidopsis thaliana (Mouse-ear cress)).